The following is a 1925-amino-acid chain: Plexin-D1 (1925 aa).

Over residues 1–18 (MAPRAAGGAPLSARAAAA) the composition is skewed to low complexity. The tract at residues 1–23 (MAPRAAGGAPLSARAAAASPPPF) is disordered. Residues 1-46 (MAPRAAGGAPLSARAAAASPPPFQTPPRCPVPLLLLLLLGAARAGA) form the signal peptide. The 500-residue stretch at 47–546 (LEIQRRFPSP…TSHQMARVKV (500 aa)) folds into the Sema domain. The Extracellular segment spans residues 47 to 1271 (LEIQRRFPSP…TLQLGGSETA (1225 aa)). N-linked (GlcNAc...) asparagine glycosylation occurs at asparagine 86. Intrachain disulfides connect cysteine 104–cysteine 114 and cysteine 140–cysteine 148. Asparagine 155, asparagine 188, and asparagine 224 each carry an N-linked (GlcNAc...) asparagine glycan. 2 cysteine pairs are disulfide-bonded: cysteine 322/cysteine 445 and cysteine 345/cysteine 389. N-linked (GlcNAc...) asparagine glycosylation is found at asparagine 481 and asparagine 500. 5 disulfide bridges follow: cysteine 549–cysteine 566, cysteine 555–cysteine 600, cysteine 558–cysteine 575, cysteine 569–cysteine 581, and cysteine 637–cysteine 661. Asparagine 583 is a glycosylation site (N-linked (GlcNAc...) asparagine). Residues asparagine 696, asparagine 736, asparagine 802, asparagine 965, asparagine 1017, asparagine 1060, asparagine 1099, asparagine 1118, asparagine 1132, asparagine 1237, and asparagine 1257 are each glycosylated (N-linked (GlcNAc...) asparagine). IPT/TIG domains follow at residues 891 to 979 (PEIH…FSYV), 981 to 1066 (PLVH…FWYM), and 1069 to 1160 (PVIT…LDPE). A helical membrane pass occupies residues 1272-1292 (IIVSIVICSVLLLLSVVALFV). Over 1293 to 1925 (FCTKSRRAER…DNIYECYSEA (633 aa)) the chain is Cytoplasmic.

This sequence belongs to the plexin family. As to quaternary structure, interacts with NRP1 and SEMA4A. Interacts with SH3BP1; they dissociate upon SEMA3E binding to PLXND1 allowing SH3BP1 to transduce downstream signal through RAC1 inactivation. As to expression, detected at low levels in heart, placenta, lung, skeletal muscle, kidney, thymus and liver. Detected at very low levels in brain, colon, spleen, small intestine and peripheral blood leukocytes.

Its subcellular location is the cell membrane. It localises to the cell projection. The protein localises to the lamellipodium membrane. Its function is as follows. Cell surface receptor for SEMA4A and for class 3 semaphorins, such as SEMA3A, SEMA3C and SEMA3E. Plays an important role in cell-cell signaling, and in regulating the migration of a wide spectrum of cell types. Regulates the migration of thymocytes in the medulla. Regulates endothelial cell migration. Plays an important role in ensuring the specificity of synapse formation. Required for normal development of the heart and vasculature. Mediates anti-angiogenic signaling in response to SEMA3E. The protein is Plexin-D1 (PLXND1) of Homo sapiens (Human).